The primary structure comprises 932 residues: ER degradation-enhancing alpha-mannosidase-like protein 3 (932 aa).

An N-terminal signal peptide occupies residues 1–41 (MSEAGGRGCGSPVPQRARWRLVAATAAFCLVSATSVWTAGA). N118 is a glycosylation site (N-linked (GlcNAc...) asparagine). The active-site Proton donor is the E146. An N-linked (GlcNAc...) asparagine glycan is attached at N195. D293 is a catalytic residue. The active-site Proton donor is the E387. E405 is an active-site residue. Residue T491 coordinates Ca(2+). N504 and N511 each carry an N-linked (GlcNAc...) asparagine glycan. In terms of domain architecture, PA spans 674–779 (LSKHKETRGF…KEGSIILDAI (106 aa)). The segment covering 790-799 (SDKAKDRDPE) has biased composition (basic and acidic residues). Residues 790–908 (SDKAKDRDPE…PNVSWGKKVQ (119 aa)) are disordered. N-linked (GlcNAc...) asparagine glycans are attached at residues N810 and N814. Over residues 812–825 (SQNQSGEQISSSSQ) the composition is skewed to low complexity. Over residues 856–890 (ASISPSEQTSNPTENHETTNLNGECTDLDNQLQEQ) the composition is skewed to polar residues. N900 carries an N-linked (GlcNAc...) asparagine glycan. Positions 929-932 (KDEL) match the Prevents secretion from ER motif.

The protein belongs to the glycosyl hydrolase 47 family. The cofactor is Ca(2+).

The protein resides in the endoplasmic reticulum lumen. It carries out the reaction N(4)-(alpha-D-Man-(1-&gt;2)-alpha-D-Man-(1-&gt;2)-alpha-D-Man-(1-&gt;3)-[alpha-D-Man-(1-&gt;2)-alpha-D-Man-(1-&gt;3)-[alpha-D-Man-(1-&gt;2)-alpha-D-Man-(1-&gt;6)]-alpha-D-Man-(1-&gt;6)]-beta-D-Man-(1-&gt;4)-beta-D-GlcNAc-(1-&gt;4)-beta-D-GlcNAc)-L-asparaginyl-[protein] (N-glucan mannose isomer 9A1,2,3B1,2,3) + 4 H2O = N(4)-(alpha-D-Man-(1-&gt;3)-[alpha-D-Man-(1-&gt;3)-[alpha-D-Man-(1-&gt;6)]-alpha-D-Man-(1-&gt;6)]-beta-D-Man-(1-&gt;4)-beta-D-GlcNAc-(1-&gt;4)-beta-D-GlcNAc)-L-asparaginyl-[protein] (N-glucan mannose isomer 5A1,2) + 4 beta-D-mannose. The catalysed reaction is N(4)-(alpha-D-Man-(1-&gt;2)-alpha-D-Man-(1-&gt;2)-alpha-D-Man-(1-&gt;3)-[alpha-D-Man-(1-&gt;3)-[alpha-D-Man-(1-&gt;2)-alpha-D-Man-(1-&gt;6)]-alpha-D-Man-(1-&gt;6)]-beta-D-Man-(1-&gt;4)-beta-D-GlcNAc-(1-&gt;4)-beta-D-GlcNAc)-L-asparaginyl-[protein] (N-glucan mannose isomer 8A1,2,3B1,3) + 3 H2O = N(4)-(alpha-D-Man-(1-&gt;3)-[alpha-D-Man-(1-&gt;3)-[alpha-D-Man-(1-&gt;6)]-alpha-D-Man-(1-&gt;6)]-beta-D-Man-(1-&gt;4)-beta-D-GlcNAc-(1-&gt;4)-beta-D-GlcNAc)-L-asparaginyl-[protein] (N-glucan mannose isomer 5A1,2) + 3 beta-D-mannose. Its pathway is protein modification; protein glycosylation. Involved in endoplasmic reticulum-associated degradation (ERAD). Accelerates the glycoprotein ERAD by proteasomes, by catalyzing mannose trimming from Man8GlcNAc2 to Man7GlcNAc2 in the N-glycans. May also participate in mannose trimming from all glycoproteins and not just misfolded ones targeted to ERAD. May have alpha 1,2-mannosidase activity. The sequence is that of ER degradation-enhancing alpha-mannosidase-like protein 3 (EDEM3) from Homo sapiens (Human).